The primary structure comprises 195 residues: Recombination protein RecR (195 aa).

A C4-type zinc finger spans residues 54–69 (CTICGSYTEDEICSIC). The Toprim domain maps to 77-172 (ATICVVGFPQ…NITRLASGLP (96 aa)).

The protein belongs to the RecR family.

Functionally, may play a role in DNA repair. It seems to be involved in an RecBC-independent recombinational process of DNA repair. It may act with RecF and RecO. The sequence is that of Recombination protein RecR from Treponema denticola (strain ATCC 35405 / DSM 14222 / CIP 103919 / JCM 8153 / KCTC 15104).